The chain runs to 236 residues: Virion protein US10 homolog (236 aa).

The interval 1–32 (MDGAYGHVHNGSPMAVDGEESGAGTGTGAGAD) is disordered. A compositionally biased stretch (gly residues) spans 21–31 (SGAGTGTGAGA). Residues 138–150 (CAYWCCLGHAFAC) fold into a zinc finger.

Belongs to the herpesviridae US10 family. Phosphorylated.

Its subcellular location is the virion tegument. It is found in the host nucleus matrix. The sequence is that of Virion protein US10 homolog from Equine herpesvirus 1 (strain Ab4p) (EHV-1).